Here is a 173-residue protein sequence, read N- to C-terminus: Probable WRKY transcription factor 50 (173 aa).

A DNA-binding region (WRKY) is located at residues 107-172; it reads SEVEVLDDGF…YEGSHNHSSM (66 aa).

The protein belongs to the WRKY group II-c family.

It localises to the nucleus. Functionally, transcription factor. Interacts specifically with the W box (5'-(T)TGAC[CT]-3'), a frequently occurring elicitor-responsive cis-acting element. The chain is Probable WRKY transcription factor 50 (WRKY50) from Arabidopsis thaliana (Mouse-ear cress).